The following is a 140-amino-acid chain: Putative 6-pyruvoyl tetrahydrobiopterin synthase (140 aa).

Histidine 19 serves as a coordination point for Zn(2+). Cysteine 38 functions as the Proton acceptor in the catalytic mechanism. Zn(2+) is bound by residues histidine 44 and histidine 46. Catalysis depends on charge relay system residues histidine 84 and glutamate 129.

Belongs to the PTPS family. As to quaternary structure, homohexamer formed of two homotrimers in a head to head fashion. Zn(2+) is required as a cofactor.

The catalysed reaction is 7,8-dihydroneopterin 3'-triphosphate = 6-pyruvoyl-5,6,7,8-tetrahydropterin + triphosphate + H(+). It functions in the pathway cofactor biosynthesis; tetrahydrobiopterin biosynthesis; tetrahydrobiopterin from 7,8-dihydroneopterin triphosphate: step 1/3. In terms of biological role, involved in the biosynthesis of tetrahydrobiopterin, an essential cofactor of aromatic amino acid hydroxylases. Catalyzes the transformation of 7,8-dihydroneopterin triphosphate into 6-pyruvoyl tetrahydropterin. The protein is Putative 6-pyruvoyl tetrahydrobiopterin synthase (ptps-1) of Caenorhabditis elegans.